A 336-amino-acid polypeptide reads, in one-letter code: tRNA-splicing endonuclease (336 aa).

Residues Tyr271, His282, and Lys313 contribute to the active site.

This sequence belongs to the tRNA-intron endonuclease family. Archaeal long subfamily. In terms of assembly, homodimer.

It carries out the reaction pretRNA = a 3'-half-tRNA molecule with a 5'-OH end + a 5'-half-tRNA molecule with a 2',3'-cyclic phosphate end + an intron with a 2',3'-cyclic phosphate and a 5'-hydroxyl terminus.. In terms of biological role, endonuclease that removes tRNA introns. Cleaves pre-tRNA at the 5'- and 3'-splice sites to release the intron. The products are an intron and two tRNA half-molecules bearing 2',3' cyclic phosphate and 5'-OH termini. Recognizes a pseudosymmetric substrate in which 2 bulged loops of 3 bases are separated by a stem of 4 bp. The protein is tRNA-splicing endonuclease of Natronomonas pharaonis (strain ATCC 35678 / DSM 2160 / CIP 103997 / JCM 8858 / NBRC 14720 / NCIMB 2260 / Gabara) (Halobacterium pharaonis).